Here is a 313-residue protein sequence, read N- to C-terminus: N-acetyl-gamma-glutamyl-phosphate reductase (313 aa).

The active site involves cysteine 117.

The protein belongs to the NAGSA dehydrogenase family. Type 2 subfamily.

The protein resides in the cytoplasm. The enzyme catalyses N-acetyl-L-glutamate 5-semialdehyde + phosphate + NADP(+) = N-acetyl-L-glutamyl 5-phosphate + NADPH + H(+). It functions in the pathway amino-acid biosynthesis; L-arginine biosynthesis; N(2)-acetyl-L-ornithine from L-glutamate: step 3/4. Its function is as follows. Catalyzes the NADPH-dependent reduction of N-acetyl-5-glutamyl phosphate to yield N-acetyl-L-glutamate 5-semialdehyde. The sequence is that of N-acetyl-gamma-glutamyl-phosphate reductase from Burkholderia cenocepacia (strain ATCC BAA-245 / DSM 16553 / LMG 16656 / NCTC 13227 / J2315 / CF5610) (Burkholderia cepacia (strain J2315)).